A 249-amino-acid polypeptide reads, in one-letter code: General transcription factor IIF subunit 2 (249 aa).

At A2 the chain carries N-acetylalanine. K22, K33, and K137 each carry N6-acetyllysine. S142 bears the Phosphoserine mark. The DNA site is built by G227 and H229. Residue S248 is modified to Phosphoserine.

The protein belongs to the TFIIF beta subunit family. In terms of assembly, heterodimer of an alpha and a beta subunit. Interacts with HTATSF1 and URI1. Interacts with GPBP1. Interacts with GTF2B (via N-terminus); this interaction is inhibited in presence of GTF2F1. Part of TBP-based Pol II pre-initiation complex (PIC), in which Pol II core assembles with general transcription factors and other specific initiation factors including GTF2E1, GTF2E2, GTF2F1, GTF2F2, TCEA1, ERCC2, ERCC3, GTF2H2, GTF2H3, GTF2H4, GTF2H5, GTF2A1, GTF2A2, GTF2B and TBP; this large multi-subunit PIC complex mediates DNA unwinding and targets Pol II core to the transcription start site where the first phosphodiester bond forms.

It is found in the nucleus. Functionally, TFIIF is a general transcription initiation factor that binds to RNA polymerase II and helps to recruit it to the initiation complex in collaboration with TFIIB. The polypeptide is General transcription factor IIF subunit 2 (Gtf2f2) (Mus musculus (Mouse)).